The sequence spans 378 residues: Alcohol dehydrogenase 1 (378 aa).

Cys48 contributes to the Zn(2+) binding site. 49 to 53 (HTDVL) is a binding site for NAD(+). Residues His69, Cys99, Cys102, Cys105, Cys113, and Cys177 each contribute to the Zn(2+) site. Residues 202 to 207 (GIGTVG), Asp226, Lys231, 274 to 276 (TGV), 297 to 299 (IGA), and 321 to 323 (TTF) contribute to the NAD(+) site.

Belongs to the zinc-containing alcohol dehydrogenase family. Class-IV subfamily. As to quaternary structure, homodimer. The cofactor is Zn(2+). Expressed in flowers and disk florets.

The protein operates within isoprenoid biosynthesis. The sequence is that of Alcohol dehydrogenase 1 from Tanacetum cinerariifolium (Dalmatian daisy).